A 414-amino-acid polypeptide reads, in one-letter code: Ciliary microtubule-associated protein 2 (414 aa).

This is Ciliary microtubule-associated protein 2 (Cimap2) from Mus musculus (Mouse).